Consider the following 382-residue polypeptide: O-methyltransferase okaF (382 aa).

Residues glutamate 249 and arginine 287 each coordinate S-adenosyl-L-methionine. Residue histidine 291 is the Proton acceptor of the active site.

The protein belongs to the class I-like SAM-binding methyltransferase superfamily. Cation-independent O-methyltransferase family.

It carries out the reaction 3-desmethyl okaramine B + S-adenosyl-L-methionine = okaramine B + S-adenosyl-L-homocysteine + H(+). Its pathway is alkaloid biosynthesis. Its function is as follows. O-methyltransferase; part of the gene cluster that mediates the biosynthesis of okaramine B, a prenylated indole alkaloid that possesses an unusual octacyclic ring system, including a four-membered azetidine ring and an eight-membered azocine ring, and that exhibits insecticidal activity against silkworm larvae. Within the pathway, okaF catalyzes the last step which is the methylation of 3-desmethyl okaramine B to produce okaramine B. With okaG, OkaF is also able to produce okaramine D from okaramine E. The biosynthesis begins with the NRPS okaA that condenses two tryptophan molecules into cyclo(L-Trp-L-Trp). Prenylation by the prenyltransferase okaC then leads to the formation of cyclo(N8-(alpha,alpha-dimethylallyl)-L-Trp-6a-(alpha,alpha-dime-thylallyl)-L-Trp). This is followed by indole 2,3-epoxidation by the FAD-dependent monooxygenase okaB to facilitate the formation of the hexahydropyrrolo[2,3-b]indole (HPI) moiety of okaramine C. The cytochrome P450 monooxygenase okaD then likely catalyzes formation of the eight-membered ring of okaramine A. The dioxygenase okaE further forms the unusual 2-dimethyl-3-methyl-azetidine ring to yield 12-deshydroxyl okaramine E, as well as the hydroxylation of 12-deshydroxyl okaramine E to produce okaramine E. The cytochrome P450 monoxygenase okaG converts 12-deshydroxyl okaramine E into 3-desmethyl okaramine B which is further methylated by the methyltransferase okaF into okaramine B. In a shunt pathway, okaG and okaF together are also able to convert okaramine E into okaramine D. Okaramine H is produced by nonenzymatic conversion from okaramine A. The chain is O-methyltransferase okaF from Penicillium ochrochloron.